Reading from the N-terminus, the 695-residue chain is Elongation factor G 1 (695 aa).

In terms of domain architecture, tr-type G spans 6-282 (STFRNIGISA…AITYYLPDPT (277 aa)). Residues 15-22 (AHIDSGKT), 82-86 (DTPGH), and 136-139 (NKCD) each bind GTP.

It belongs to the TRAFAC class translation factor GTPase superfamily. Classic translation factor GTPase family. EF-G/EF-2 subfamily.

The protein localises to the cytoplasm. Its function is as follows. Catalyzes the GTP-dependent ribosomal translocation step during translation elongation. During this step, the ribosome changes from the pre-translocational (PRE) to the post-translocational (POST) state as the newly formed A-site-bound peptidyl-tRNA and P-site-bound deacylated tRNA move to the P and E sites, respectively. Catalyzes the coordinated movement of the two tRNA molecules, the mRNA and conformational changes in the ribosome. The chain is Elongation factor G 1 (fusA) from Treponema pallidum (strain Nichols).